A 160-amino-acid chain; its full sequence is Protein BOLA1, chloroplastic (160 aa).

The transit peptide at methionine 1 to valine 50 directs the protein to the chloroplast. Positions glutamate 39 to aspartate 61 are enriched in polar residues. A disordered region spans residues glutamate 39 to glutamate 66.

This sequence belongs to the bolA/yrbA family. Interacts in vitro with GRXS14, GRXS15, GRXS16 and GRXS17, but not with GRXC5. Interacts in vivo only with GRXS14 and GRXS16.

It localises to the plastid. The protein localises to the chloroplast. May act either alone or in interaction with glutaredoxin as a redox-regulated transcriptional regulator, or as a factor regulating Fe-S cluster biogenesis. The glutaredoxin-BOLA1 heterodimers bind a labile, oxygen sensitive iron-sulfur cluster. This is Protein BOLA1, chloroplastic from Arabidopsis thaliana (Mouse-ear cress).